Consider the following 247-residue polypeptide: Anamorsin homolog (247 aa).

Residues 4–128 form an N-terminal SAM-like domain region; that stretch reads FKGLQKSLYI…ETGSSARLSF (125 aa). The interval 129-160 is linker; sequence AKKNASALNVWKISGDDEELIDEEDLLDEEDK. The [2Fe-2S] cluster site is built by Cys171, Cys180, Cys183, and Cys185. The segment at 171 to 185 is fe-S binding site A; that stretch reads CSTTGKRKACKNCSC. [4Fe-4S] cluster contacts are provided by Cys208, Cys211, Cys219, and Cys222. 2 consecutive short sequence motifs (cx2C motif) follow at residues 208 to 211 and 219 to 222; these read CGNC and CSTC. Residues 208 to 222 form a fe-S binding site B region; that stretch reads CGNCYLGDAFRCSTC.

The protein belongs to the anamorsin family. Monomer. [2Fe-2S] cluster is required as a cofactor. [4Fe-4S] cluster serves as cofactor.

The protein localises to the cytoplasm. It localises to the mitochondrion intermembrane space. Its function is as follows. Component of the cytosolic iron-sulfur (Fe-S) protein assembly (CIA) machinery. Required for the maturation of extramitochondrial Fe-S proteins. Part of an electron transfer chain functioning in an early step of cytosolic Fe-S biogenesis, facilitating the de novo assembly of a [4Fe-4S] cluster on the cytosolic Fe-S scaffold complex. Electrons are transferred from NADPH via a FAD- and FMN-containing diflavin oxidoreductase. Together with the diflavin oxidoreductase, also required for the assembly of the diferric tyrosyl radical cofactor of ribonucleotide reductase (RNR), probably by providing electrons for reduction during radical cofactor maturation in the catalytic small subunit. This Drosophila persimilis (Fruit fly) protein is Anamorsin homolog.